Here is a 106-residue protein sequence, read N- to C-terminus: Small ribosomal subunit protein uS10 (106 aa).

This sequence belongs to the universal ribosomal protein uS10 family. In terms of assembly, part of the 30S ribosomal subunit.

Involved in the binding of tRNA to the ribosomes. This Pyrobaculum neutrophilum (strain DSM 2338 / JCM 9278 / NBRC 100436 / V24Sta) (Thermoproteus neutrophilus) protein is Small ribosomal subunit protein uS10.